The sequence spans 339 residues: Phenylalanine--tRNA ligase alpha subunit (339 aa).

A Mg(2+)-binding site is contributed by glutamate 254.

The protein belongs to the class-II aminoacyl-tRNA synthetase family. Phe-tRNA synthetase alpha subunit type 1 subfamily. In terms of assembly, tetramer of two alpha and two beta subunits. The cofactor is Mg(2+).

It localises to the cytoplasm. The catalysed reaction is tRNA(Phe) + L-phenylalanine + ATP = L-phenylalanyl-tRNA(Phe) + AMP + diphosphate + H(+). The sequence is that of Phenylalanine--tRNA ligase alpha subunit from Clostridium kluyveri (strain ATCC 8527 / DSM 555 / NBRC 12016 / NCIMB 10680 / K1).